The following is a 334-amino-acid chain: ADP-L-glycero-D-manno-heptose-6-epimerase (334 aa).

NADP(+) contacts are provided by residues 11 to 12 (FI), 32 to 33 (DN), Lys39, Lys54, 77 to 81 (QGACS), and Asn94. The active-site Proton acceptor is the Tyr141. NADP(+) is bound at residue Lys145. A substrate-binding site is contributed by Asn171. Val172 and Lys180 together coordinate NADP(+). Lys180 functions as the Proton acceptor in the catalytic mechanism. Residues Arg182, His189, 203–206 (FGSN), Arg216, and Tyr295 each bind substrate.

This sequence belongs to the NAD(P)-dependent epimerase/dehydratase family. HldD subfamily. As to quaternary structure, homopentamer. The cofactor is NADP(+).

It carries out the reaction ADP-D-glycero-beta-D-manno-heptose = ADP-L-glycero-beta-D-manno-heptose. The protein operates within nucleotide-sugar biosynthesis; ADP-L-glycero-beta-D-manno-heptose biosynthesis; ADP-L-glycero-beta-D-manno-heptose from D-glycero-beta-D-manno-heptose 7-phosphate: step 4/4. Catalyzes the interconversion between ADP-D-glycero-beta-D-manno-heptose and ADP-L-glycero-beta-D-manno-heptose via an epimerization at carbon 6 of the heptose. This Neisseria meningitidis serogroup C / serotype 2a (strain ATCC 700532 / DSM 15464 / FAM18) protein is ADP-L-glycero-D-manno-heptose-6-epimerase.